We begin with the raw amino-acid sequence, 379 residues long: Homoserine O-succinyltransferase (379 aa).

The 310-residue stretch at 51–360 folds into the AB hydrolase-1 domain; it reads NAVLICHALS…DAPQGHDAFL (310 aa). The active-site Nucleophile is the Ser-157. Arg-227 is a binding site for substrate. Residues Asp-323 and His-356 contribute to the active site. Residue Asp-357 participates in substrate binding.

This sequence belongs to the AB hydrolase superfamily. MetX family. As to quaternary structure, homodimer.

The protein resides in the cytoplasm. The enzyme catalyses L-homoserine + succinyl-CoA = O-succinyl-L-homoserine + CoA. It functions in the pathway amino-acid biosynthesis; L-methionine biosynthesis via de novo pathway; O-succinyl-L-homoserine from L-homoserine: step 1/1. Functionally, transfers a succinyl group from succinyl-CoA to L-homoserine, forming succinyl-L-homoserine. This is Homoserine O-succinyltransferase from Pseudomonas fluorescens (strain ATCC BAA-477 / NRRL B-23932 / Pf-5).